We begin with the raw amino-acid sequence, 246 residues long: TLC domain-containing protein 2 (246 aa).

6 consecutive transmembrane segments (helical) span residues 5–25 (SVILTTGSSVGFFKLVNYGLG), 43–63 (ISTSFVHSLITGVWSVLCFCM), 79–99 (SHALVSVSIGYFIYDFLDMVI), 107–127 (WELLFHHVVVITCFGISVLTC), 128–148 (RYVGFAVVALLVEINSVFLHL), and 199–219 (FSYTIGSVGLAIMTAMNIVLF). In terms of domain architecture, TLC spans 35-231 (RNAWKWNNIS…LMRSDFMKAS (197 aa)).

This sequence belongs to the TLCD family.

The protein localises to the cell membrane. In terms of biological role, regulates the composition and fluidity of the plasma membrane. Inhibits the incorporation of membrane-fluidizing phospholipids containing omega-3 long-chain polyunsaturated fatty acids (LCPUFA) and thereby promotes membrane rigidity. Does not appear to have any effect on LCPUFA synthesis. This is TLC domain-containing protein 2 (tlcd2) from Danio rerio (Zebrafish).